Reading from the N-terminus, the 413-residue chain is CinA-like protein (413 aa).

Belongs to the CinA family.

This chain is CinA-like protein, found in Crocosphaera subtropica (strain ATCC 51142 / BH68) (Cyanothece sp. (strain ATCC 51142)).